Consider the following 87-residue polypeptide: Large ribosomal subunit protein bL31B (87 aa).

It belongs to the bacterial ribosomal protein bL31 family. Type B subfamily. As to quaternary structure, part of the 50S ribosomal subunit.

The chain is Large ribosomal subunit protein bL31B from Halorhodospira halophila (strain DSM 244 / SL1) (Ectothiorhodospira halophila (strain DSM 244 / SL1)).